Reading from the N-terminus, the 240-residue chain is Transcriptional regulatory protein rxt2 (240 aa).

This sequence belongs to the RXT2 family. As to quaternary structure, component of the RPD3C(L) complex.

It is found in the nucleus. Its function is as follows. Component of the RPD3C(L) histone deacetylase complex (HDAC) responsible for the deacetylation of lysine residues on the N-terminal part of the core histones (H2A, H2B, H3 and H4). Histone deacetylation gives a tag for epigenetic repression and plays an important role in transcriptional regulation, cell cycle progression and developmental events. This chain is Transcriptional regulatory protein rxt2 (rtx2), found in Schizosaccharomyces pombe (strain 972 / ATCC 24843) (Fission yeast).